The following is a 360-amino-acid chain: Phosphoserine aminotransferase (360 aa).

Position 41 (Arg-41) interacts with L-glutamate. 4 residues coordinate pyridoxal 5'-phosphate: Trp-101, Thr-152, Asp-172, and Gln-195. N6-(pyridoxal phosphate)lysine is present on Lys-196. Residue 237-238 (NT) coordinates pyridoxal 5'-phosphate.

This sequence belongs to the class-V pyridoxal-phosphate-dependent aminotransferase family. SerC subfamily. As to quaternary structure, homodimer. Pyridoxal 5'-phosphate serves as cofactor.

The protein resides in the cytoplasm. It carries out the reaction O-phospho-L-serine + 2-oxoglutarate = 3-phosphooxypyruvate + L-glutamate. It catalyses the reaction 4-(phosphooxy)-L-threonine + 2-oxoglutarate = (R)-3-hydroxy-2-oxo-4-phosphooxybutanoate + L-glutamate. Its pathway is amino-acid biosynthesis; L-serine biosynthesis; L-serine from 3-phospho-D-glycerate: step 2/3. The protein operates within cofactor biosynthesis; pyridoxine 5'-phosphate biosynthesis; pyridoxine 5'-phosphate from D-erythrose 4-phosphate: step 3/5. Its function is as follows. Catalyzes the reversible conversion of 3-phosphohydroxypyruvate to phosphoserine and of 3-hydroxy-2-oxo-4-phosphonooxybutanoate to phosphohydroxythreonine. The polypeptide is Phosphoserine aminotransferase (Burkholderia ambifaria (strain ATCC BAA-244 / DSM 16087 / CCUG 44356 / LMG 19182 / AMMD) (Burkholderia cepacia (strain AMMD))).